A 738-amino-acid polypeptide reads, in one-letter code: MLHISRLGLFLALFAIVMHSVNLIKYTSDPLEAFKTVNRHNWSDEQREHFYDLRNLYTTFCQRNLSLDCFTQILTNVFSWNIRDLQCKSAVNLSPLQNLPRAETKIVLSSTAANKSIVASSFSLFYLLFATLSTYTADPPCVELLPFKILGTQLFDIKLTDESLQMAISKFSNSNLTRSLTPFTPEIFFNYTSFVYFLLYNTTSCIRSNDQYFEHSPKPINVTTSFGRAIVNFHSILTTTPSSTPSSTSASITSPHIPSTNTPTPEPSPVTKNFTELQTDTIKVTPNTPTITAQTTESIKKVVKRSDFPRPMYTPTDIPTLTIRRNATIKTEQNTENPTENPKSPPKPTNFENTTIRIPETFESTTVATNTTQKLESTTFATTIGIEEISDNIYSSPKNSIYLKSKSQQSTTKFTDTEHTTPILKFTTWQDAARTYMSHNTEVQNMTENFIKISLGETMGITPKEPTNPTQLLNVKNQTEYANETHSTEVQTVKTFKEDRFQRTTLKSSSEPPTVQTLSVTPKKKLPSNVTAKTEVQVTNNALPSSNSSHSITKVTEEPKQNRMSASTHGEINHTEIPRMTPILNAHTWEKSTTPQWPFTAETSLTTSSKSAILTWSNLLTTPKEPLTNTSLRSTNHITTQLTTSNRTQSAKLTKAHVSSQTTNIYPQTITERSTDVKKKSSTESREANKTLPGNDYRVTDKNSHNHPDNLTTKAYSTQNATHYTYNERHDLNNTDST.

Residues 1–23 form the signal peptide; the sequence is MLHISRLGLFLALFAIVMHSVNL. 7 N-linked (GlcNAc...) asparagine; by host glycosylation sites follow: N41, N64, N114, N175, N190, N201, and N221. The span at 240 to 263 shows a compositional bias: low complexity; sequence TPSSTPSSTSASITSPHIPSTNTP. The interval 240 to 272 is disordered; that stretch reads TPSSTPSSTSASITSPHIPSTNTPTPEPSPVTK. N-linked (GlcNAc...) asparagine; by host glycans are attached at residues N273 and N326. The segment covering 330–342 has biased composition (polar residues); it reads KTEQNTENPTENP. Residues 330 to 351 form a disordered region; that stretch reads KTEQNTENPTENPKSPPKPTNF. N-linked (GlcNAc...) asparagine; by host glycosylation is found at N353, N370, N445, N477, N483, N529, N547, N573, N629, N646, and N689. Residues 541–554 show a composition bias toward polar residues; that stretch reads NALPSSNSSHSITK. The tract at residues 541–568 is disordered; sequence NALPSSNSSHSITKVTEEPKQNRMSAST. Residues 667-712 form a disordered region; sequence PQTITERSTDVKKKSSTESREANKTLPGNDYRVTDKNSHNHPDNLT. Composition is skewed to basic and acidic residues over residues 673–689 and 698–708; these read RSTD…REAN and RVTDKNSHNHP. 3 N-linked (GlcNAc...) asparagine; by host glycosylation sites follow: N710, N720, and N733.

It belongs to the herpesviridae U47 family. Part of a gH-gL-gO complex. In terms of processing, 120 kDa Glycoprotein O: A shorter mature protein, gO-80K, is produced probably by proteolytic cleavage. 120 kDa Glycoprotein O: Modified with high mannose-oligosaccharides. Post-translationally, N-glycosylated with complex glycans.

The protein resides in the virion. It localises to the host cell membrane. This Human herpesvirus 6B (strain Z29) (HHV-6 variant B) protein is 130 kDa Glycoprotein O (U47).